The primary structure comprises 40 residues: GCGDINAACKSDCDCCGNSVTCDCYFTDCKCRESAIRKQF.

Cystine bridges form between C2–C16, C9–C22, C15–C31, and C24–C29.

In terms of tissue distribution, expressed by the venom gland.

The protein resides in the secreted. Functionally, insecticidal neurotoxin that reversibly inhibits the N-methyl-D-aspartate (NMDA)-subtype of ionotropic glutamate receptor (GRIN) and inhibits inactivation of insect sodium channels (Nav). In vivo, is highly toxic to insects. This is U12-ctenitoxin-Co1a from Ctenus ornatus (Brazilian spider).